A 23-amino-acid chain; its full sequence is ENFAGGCATGFLRTADGRCKPTF.

Cys7 and Cys19 are joined by a disulfide.

Belongs to the GBP/PSP1/paralytic peptide family. As to expression, hemolymph.

Its function is as follows. Causes rapid, rigid paralysis when injected into Lepidopteran larvae. The physiological role may be to reduce hemolymph loss following injury and promote wound healing. The sequence is that of Paralytic peptide 2 from Manduca sexta (Tobacco hawkmoth).